We begin with the raw amino-acid sequence, 277 residues long: Basic leucine zipper 9 (277 aa).

The tract at residues 73–141 (ADSPVSANKP…ESAKRSRRRK (69 aa)) is disordered. S100 is subject to Phosphoserine. A compositionally biased stretch (polar residues) spans 109–118 (AGQSEMTNDP). The region spanning 120 to 183 (DLKRIRRMNS…RSAGTNNRVL (64 aa)) is the bZIP domain. Positions 122-141 (KRIRRMNSNRESAKRSRRRK) are basic motif. The Nuclear localization signal signature appears at 124-131 (IRRMNSNR). Positions 148 to 162 (LETQVDSLKGDNSTL) are leucine-zipper.

Belongs to the bZIP family. In terms of assembly, homodimer. Interacts with BZIP1, BZIP2, BZIP10, BZIP11, BZIP25, BZIP44, BZIP53 and BZIP63. Post-translationally, phosphorylated. Expressed in roots, shoots, stems, young leaves, and flowers, mostly in vascular tissues (e.g. phloem).

The protein resides in the nucleus. Transcription factor. The protein is Basic leucine zipper 9 (BZIP9) of Arabidopsis thaliana (Mouse-ear cress).